The following is a 762-amino-acid chain: 5-methyltetrahydropteroyltriglutamate--homocysteine methyltransferase (762 aa).

5-methyltetrahydropteroyltri-L-glutamate is bound by residues 17–20 (REWK) and lysine 111. L-homocysteine is bound by residues 435 to 437 (IGS) and glutamate 488. Residues 435–437 (IGS) and glutamate 488 each bind L-methionine. 5-methyltetrahydropteroyltri-L-glutamate contacts are provided by residues 519-520 (RC) and tryptophan 565. Aspartate 603 contributes to the L-homocysteine binding site. An L-methionine-binding site is contributed by aspartate 603. Glutamate 609 lines the 5-methyltetrahydropteroyltri-L-glutamate pocket. Residues histidine 645, cysteine 647, and glutamate 669 each coordinate Zn(2+). The active-site Proton donor is the histidine 698. Cysteine 730 provides a ligand contact to Zn(2+).

It belongs to the vitamin-B12 independent methionine synthase family. Requires Zn(2+) as cofactor.

The enzyme catalyses 5-methyltetrahydropteroyltri-L-glutamate + L-homocysteine = tetrahydropteroyltri-L-glutamate + L-methionine. It functions in the pathway amino-acid biosynthesis; L-methionine biosynthesis via de novo pathway; L-methionine from L-homocysteine (MetE route): step 1/1. Its function is as follows. Catalyzes the transfer of a methyl group from 5-methyltetrahydrofolate to homocysteine resulting in methionine formation. The sequence is that of 5-methyltetrahydropteroyltriglutamate--homocysteine methyltransferase from Bacillus cereus (strain G9842).